The sequence spans 485 residues: Probable protein phosphatase 2C 3 (485 aa).

The segment covering 1 to 11 (MSSPSPSSEAA) has biased composition (low complexity). Disordered regions lie at residues 1–29 (MSSPSPSSEAAAAHHHHHQRRQHAGAAGG) and 43–72 (ARAERPMGSGSRICARDEEDGGGGGGAEGG). The span at 13 to 23 (AHHHHHQRRQH) shows a compositional bias: basic residues. In terms of domain architecture, PPM-type phosphatase spans 107–353 (SSSSSSSLAS…DDTTCIVVDM (247 aa)). Asp-129, Gly-130, Asp-305, and Asp-344 together coordinate Mn(2+).

This sequence belongs to the PP2C family. Mg(2+) is required as a cofactor. The cofactor is Mn(2+).

The catalysed reaction is O-phospho-L-seryl-[protein] + H2O = L-seryl-[protein] + phosphate. It catalyses the reaction O-phospho-L-threonyl-[protein] + H2O = L-threonyl-[protein] + phosphate. The protein is Probable protein phosphatase 2C 3 of Oryza sativa subsp. japonica (Rice).